Here is a 473-residue protein sequence, read N- to C-terminus: Psoralen synthase (473 aa).

The chain crosses the membrane as a helical span at residues 1–17 (YFFPLFLVTIFLYKWLV). Residues 350-355 (TAPLLV) form a substrate specificity region. Residue C425 participates in heme binding.

It belongs to the cytochrome P450 family. The cofactor is heme.

The protein localises to the microsome membrane. It catalyses the reaction (7S)-marmesin + reduced [NADPH--hemoprotein reductase] + O2 = psoralen + acetone + oxidized [NADPH--hemoprotein reductase] + 2 H2O + H(+). It participates in secondary metabolite biosynthesis. Involved in the biosynthesis of coumarins and furanocoumarins (FCs), natural products required for defense responses against attacks by predators with potential medical and agroindustrial usages such as anticoagulant, rodenticide and artificial vanilla substitutes. Involved in linear furanocumarin (psoralen) biosynthesis. Converts marmesin to psoralen and, with much lower affinity, 5-hydroxymarmesin to bergaptol. In Pastinaca sativa (Wild parsnip), this protein is Psoralen synthase.